Reading from the N-terminus, the 334-residue chain is Putative B3 domain-containing protein At5g66980 (334 aa).

DNA-binding regions (TF-B3) lie at residues 8–105 and 218–317; these read LQFF…FAND and HPHF…VSGR.

The protein localises to the nucleus. This Arabidopsis thaliana (Mouse-ear cress) protein is Putative B3 domain-containing protein At5g66980.